Here is a 372-residue protein sequence, read N- to C-terminus: Aminomethyltransferase (372 aa).

Belongs to the GcvT family. The glycine cleavage system is composed of four proteins: P, T, L and H.

The enzyme catalyses N(6)-[(R)-S(8)-aminomethyldihydrolipoyl]-L-lysyl-[protein] + (6S)-5,6,7,8-tetrahydrofolate = N(6)-[(R)-dihydrolipoyl]-L-lysyl-[protein] + (6R)-5,10-methylene-5,6,7,8-tetrahydrofolate + NH4(+). The glycine cleavage system catalyzes the degradation of glycine. In Synechocystis sp. (strain ATCC 27184 / PCC 6803 / Kazusa), this protein is Aminomethyltransferase.